We begin with the raw amino-acid sequence, 207 residues long: Large ribosomal subunit protein uL18 (207 aa).

It belongs to the universal ribosomal protein uL18 family. In terms of assembly, part of the 50S ribosomal subunit. Contacts the 5S and 23S rRNAs.

Its function is as follows. This is one of the proteins that bind and probably mediate the attachment of the 5S RNA into the large ribosomal subunit, where it forms part of the central protuberance. The sequence is that of Large ribosomal subunit protein uL18 from Caldivirga maquilingensis (strain ATCC 700844 / DSM 13496 / JCM 10307 / IC-167).